We begin with the raw amino-acid sequence, 234 residues long: Purine nucleoside phosphorylase DeoD-type (234 aa).

His-5 lines the a purine D-ribonucleoside pocket. Residues Gly-21, Arg-25, Arg-44, and Arg-88–Thr-91 contribute to the phosphate site. A purine D-ribonucleoside contacts are provided by residues Asp-180 to Glu-182 and Ser-204 to Asp-205. The active-site Proton donor is Asp-205.

Belongs to the PNP/UDP phosphorylase family. In terms of assembly, homohexamer; trimer of homodimers.

It catalyses the reaction a purine D-ribonucleoside + phosphate = a purine nucleobase + alpha-D-ribose 1-phosphate. The enzyme catalyses a purine 2'-deoxy-D-ribonucleoside + phosphate = a purine nucleobase + 2-deoxy-alpha-D-ribose 1-phosphate. Catalyzes the reversible phosphorolytic breakdown of the N-glycosidic bond in the beta-(deoxy)ribonucleoside molecules, with the formation of the corresponding free purine bases and pentose-1-phosphate. This is Purine nucleoside phosphorylase DeoD-type from Buchnera aphidicola subsp. Acyrthosiphon pisum (strain APS) (Acyrthosiphon pisum symbiotic bacterium).